The sequence spans 395 residues: MWTLVVNCGSSSLKFALLNPATGETPLTGLAERLGSDLAAVRVDRGEERGTVPLPQGSYSEAFGVLLAELDALGLRQEVRAVGHRVVHGGDRFNAPVRITPEVLEVIRTCIPLAPLHNPANLAGIEAALAAFPELPQVAVFDTAFHQSMPPVAYRYAVPTVWYTCYGVRRYGFHGISHAYVAEEAARLLARDLTDLSLVTAHLGNGCSVTAVQGGRSLDTSMGLTPLEGLVMGTRSGDVDPGLPDYLAREAGLTLAEITAALNRESGLLGLSGLTNDMRELEAAAAGGNTNAQLALEIFVYRLAKTIAGMATVLGRLDALVFTGGIGENSATVRAATLARLGLLGFQLDAAANAQAVRGQGGVITSGGVPALVVNTNEERMIARETARAVKGAPA.

Asn7 is a Mg(2+) binding site. An ATP-binding site is contributed by Lys14. Substrate is bound at residue Arg85. Catalysis depends on Asp142, which acts as the Proton donor/acceptor. ATP-binding positions include 202–206 (HLGNG), 277–279 (DMR), and 325–329 (GIGEN). Position 378 (Glu378) interacts with Mg(2+).

It belongs to the acetokinase family. In terms of assembly, homodimer. It depends on Mg(2+) as a cofactor. The cofactor is Mn(2+).

It localises to the cytoplasm. The catalysed reaction is acetate + ATP = acetyl phosphate + ADP. It participates in metabolic intermediate biosynthesis; acetyl-CoA biosynthesis; acetyl-CoA from acetate: step 1/2. Functionally, catalyzes the formation of acetyl phosphate from acetate and ATP. Can also catalyze the reverse reaction. This chain is Acetate kinase, found in Deinococcus geothermalis (strain DSM 11300 / CIP 105573 / AG-3a).